Reading from the N-terminus, the 393-residue chain is Probable acetyl-CoA acyltransferase (393 aa).

The Acyl-thioester intermediate role is filled by Cys88. Residues His349 and Cys378 each act as proton acceptor in the active site.

The protein belongs to the thiolase-like superfamily. Thiolase family.

It localises to the cytoplasm. The enzyme catalyses 2 acetyl-CoA = acetoacetyl-CoA + CoA. The chain is Probable acetyl-CoA acyltransferase from Staphylococcus aureus (strain MRSA252).